We begin with the raw amino-acid sequence, 196 residues long: Guanylate kinase (196 aa).

Residues Arg-7–Leu-191 form the Guanylate kinase-like domain. ATP is bound at residue Gly-14–Gly-21.

Belongs to the guanylate kinase family.

It is found in the cytoplasm. It catalyses the reaction GMP + ATP = GDP + ADP. Functionally, essential for recycling GMP and indirectly, cGMP. This chain is Guanylate kinase, found in Mycoplasmopsis pulmonis (strain UAB CTIP) (Mycoplasma pulmonis).